Reading from the N-terminus, the 67-residue chain is DNA-directed RNA polymerase subunit omega (67 aa).

Belongs to the RNA polymerase subunit omega family. The RNAP catalytic core consists of 2 alpha, 1 beta, 1 beta' and 1 omega subunit. When a sigma factor is associated with the core the holoenzyme is formed, which can initiate transcription.

The enzyme catalyses RNA(n) + a ribonucleoside 5'-triphosphate = RNA(n+1) + diphosphate. In terms of biological role, promotes RNA polymerase assembly. Latches the N- and C-terminal regions of the beta' subunit thereby facilitating its interaction with the beta and alpha subunits. The chain is DNA-directed RNA polymerase subunit omega from Bordetella petrii (strain ATCC BAA-461 / DSM 12804 / CCUG 43448).